A 346-amino-acid chain; its full sequence is 4-hydroxy-3-methylbut-2-enyl diphosphate reductase (346 aa).

Cys-19 serves as a coordination point for [4Fe-4S] cluster. Residues His-48 and His-84 each contribute to the (2E)-4-hydroxy-3-methylbut-2-enyl diphosphate site. The dimethylallyl diphosphate site is built by His-48 and His-84. Residues His-48 and His-84 each contribute to the isopentenyl diphosphate site. Cys-106 provides a ligand contact to [4Fe-4S] cluster. Residue His-134 participates in (2E)-4-hydroxy-3-methylbut-2-enyl diphosphate binding. His-134 is a dimethylallyl diphosphate binding site. His-134 is a binding site for isopentenyl diphosphate. Residue Glu-136 is the Proton donor of the active site. Thr-175 is a (2E)-4-hydroxy-3-methylbut-2-enyl diphosphate binding site. Cys-205 contributes to the [4Fe-4S] cluster binding site. Residues Ser-233, Ser-234, Asn-235, and Ser-278 each coordinate (2E)-4-hydroxy-3-methylbut-2-enyl diphosphate. The dimethylallyl diphosphate site is built by Ser-233, Ser-234, Asn-235, and Ser-278. Positions 233, 234, 235, and 278 each coordinate isopentenyl diphosphate.

Belongs to the IspH family. [4Fe-4S] cluster is required as a cofactor.

It carries out the reaction isopentenyl diphosphate + 2 oxidized [2Fe-2S]-[ferredoxin] + H2O = (2E)-4-hydroxy-3-methylbut-2-enyl diphosphate + 2 reduced [2Fe-2S]-[ferredoxin] + 2 H(+). The catalysed reaction is dimethylallyl diphosphate + 2 oxidized [2Fe-2S]-[ferredoxin] + H2O = (2E)-4-hydroxy-3-methylbut-2-enyl diphosphate + 2 reduced [2Fe-2S]-[ferredoxin] + 2 H(+). It functions in the pathway isoprenoid biosynthesis; dimethylallyl diphosphate biosynthesis; dimethylallyl diphosphate from (2E)-4-hydroxy-3-methylbutenyl diphosphate: step 1/1. The protein operates within isoprenoid biosynthesis; isopentenyl diphosphate biosynthesis via DXP pathway; isopentenyl diphosphate from 1-deoxy-D-xylulose 5-phosphate: step 6/6. In terms of biological role, catalyzes the conversion of 1-hydroxy-2-methyl-2-(E)-butenyl 4-diphosphate (HMBPP) into a mixture of isopentenyl diphosphate (IPP) and dimethylallyl diphosphate (DMAPP). Acts in the terminal step of the DOXP/MEP pathway for isoprenoid precursor biosynthesis. The chain is 4-hydroxy-3-methylbut-2-enyl diphosphate reductase from Brucella abortus (strain S19).